A 468-amino-acid polypeptide reads, in one-letter code: ATP synthase subunit beta (468 aa).

155-162 (GGAGVGKT) lines the ATP pocket.

The protein belongs to the ATPase alpha/beta chains family. F-type ATPases have 2 components, CF(1) - the catalytic core - and CF(0) - the membrane proton channel. CF(1) has five subunits: alpha(3), beta(3), gamma(1), delta(1), epsilon(1). CF(0) has three main subunits: a(1), b(2) and c(9-12). The alpha and beta chains form an alternating ring which encloses part of the gamma chain. CF(1) is attached to CF(0) by a central stalk formed by the gamma and epsilon chains, while a peripheral stalk is formed by the delta and b chains.

The protein localises to the cell inner membrane. It catalyses the reaction ATP + H2O + 4 H(+)(in) = ADP + phosphate + 5 H(+)(out). Produces ATP from ADP in the presence of a proton gradient across the membrane. The catalytic sites are hosted primarily by the beta subunits. The polypeptide is ATP synthase subunit beta (Bdellovibrio bacteriovorus (strain ATCC 15356 / DSM 50701 / NCIMB 9529 / HD100)).